We begin with the raw amino-acid sequence, 286 residues long: Pre-mRNA-processing protein 45 (286 aa).

Disordered stretches follow at residues 111 to 146 and 253 to 286; these read TNDI…SSSK and KQRN…RRRY. The span at 132-145 shows a compositional bias: low complexity; it reads PNQEQQQQSSSSSS. The segment covering 253–279 has biased composition (basic and acidic residues); that stretch reads KQRNEIRQQKQLQEKRLRDEKIKEIAN.

Belongs to the SNW family. Associated with the spliceosome.

Its subcellular location is the nucleus. Involved in pre-mRNA splicing. This is Pre-mRNA-processing protein 45 (PRP45) from Candida albicans (strain SC5314 / ATCC MYA-2876) (Yeast).